Reading from the N-terminus, the 289-residue chain is Cuticle collagen 19 (289 aa).

The first 18 residues, 1-18 (MGKLIVVGSCGVLVCVLA), serve as a signal peptide directing secretion. Positions 95–289 (SEGCPAGPPG…PCPSRAAYKA (195 aa)) are disordered. 2 triple-helical region regions span residues 101–130 (GPPGPPGEGGQKGNPGHDGDDGKPGAPGVI) and 147–269 (GRPG…KGED). A compositionally biased stretch (gly residues) spans 162-183 (GPAGGNGRRGPPGPVGGPGEQG). Low complexity-rich tracts occupy residues 184–207 (PQGDAGRPGAAGRPGPAGPRGEPG) and 223–239 (PRGETGPAGNPGAPGND).

Belongs to the cuticular collagen family. As to quaternary structure, collagen polypeptide chains are complexed within the cuticle by disulfide bonds and other types of covalent cross-links.

Its function is as follows. Nematode cuticles are composed largely of collagen-like proteins. The cuticle functions both as an exoskeleton and as a barrier to protect the worm from its environment. In Caenorhabditis elegans, this protein is Cuticle collagen 19 (col-19).